The primary structure comprises 639 residues: Synaptotagmin-16 (639 aa).

A compositionally biased stretch (polar residues) spans 95–119; sequence NSDLQDSVQTASPTLGQQAEDSSSV. The disordered stretch occupies residues 95 to 191; sequence NSDLQDSVQT…SSESDEDVTK (97 aa). Over residues 121-134 the composition is skewed to pro residues; sequence PPWPSKIPGAPKPQ. A compositionally biased stretch (basic and acidic residues) spans 142 to 151; that stretch reads EEDHHSERQR. The span at 174–187 shows a compositional bias: acidic residues; it reads GDDEEPSTSSESDE. The C2 1 domain maps to 344 to 463; that stretch reads KCGDLDVIFE…HPEGEMKVTL (120 aa). Positions 470–496 are disordered; sequence NLSSGESPLSPSVVSHSDSASSTQSLS. Positions 476-496 are enriched in low complexity; that stretch reads SPLSPSVVSHSDSASSTQSLS. Residues 499–634 form the C2 2 domain; the sequence is GVPELLVGLS…SKGQQTCRWH (136 aa).

This sequence belongs to the synaptotagmin family. In terms of assembly, homodimer. Can also form heterodimers. Highly expressed in heart and testis. Moderately expressed in kidney.

May be involved in the trafficking and exocytosis of secretory vesicles in non-neuronal tissues. Is Ca(2+)-independent. This Mus musculus (Mouse) protein is Synaptotagmin-16 (Syt16).